An 827-amino-acid chain; its full sequence is Glycerol-3-phosphate acyltransferase (827 aa).

Positions Cys325–Met330 match the HXXXXD motif motif.

This sequence belongs to the GPAT/DAPAT family.

The protein localises to the cell inner membrane. The enzyme catalyses sn-glycerol 3-phosphate + an acyl-CoA = a 1-acyl-sn-glycero-3-phosphate + CoA. It functions in the pathway phospholipid metabolism; CDP-diacylglycerol biosynthesis; CDP-diacylglycerol from sn-glycerol 3-phosphate: step 1/3. This Shigella boydii serotype 4 (strain Sb227) protein is Glycerol-3-phosphate acyltransferase.